The chain runs to 88 residues: RNA-binding protein Hfq (88 aa).

The 60-residue stretch at 9 to 68 folds into the Sm domain; that stretch reads DPFLNALRRERIPVSIYLVNGIKLQGQIESFDQFVILLKNTVNQMVYKHAISTVVPARAV. Residues 66–88 form a disordered region; it reads RAVSHHSASDRPQGERPQEKTEE. The span at 72–88 shows a compositional bias: basic and acidic residues; it reads SASDRPQGERPQEKTEE.

This sequence belongs to the Hfq family. As to quaternary structure, homohexamer.

Functionally, RNA chaperone that binds small regulatory RNA (sRNAs) and mRNAs to facilitate mRNA translational regulation in response to envelope stress, environmental stress and changes in metabolite concentrations. Also binds with high specificity to tRNAs. The protein is RNA-binding protein Hfq of Aliivibrio fischeri (strain ATCC 700601 / ES114) (Vibrio fischeri).